The sequence spans 319 residues: MASPTVKLNSGYDMPLVGFGLWKVNNDTCADQIYHAIKEGYRLFDGACDYGNEVEAGQGIARAIKDGLVKREELFIVSKLWNSFHDGDRVEPICRKQLADWGIDYFDLYIVHFPISLKYVDPAVRYPPGWKSEKDELEFGNATIQETWTAMESLVDKKLARSIGISNFSAQLVMDLLRYARIRPATLQIEHHPYLTQTRLVEYAQKEGLTVTAYSSFGPLSFLELSVQNAVDSPPLFEHQLVKSIAEKHGRTPAQVLLRWATQRGIAVIPKSNNPQRLKQNLDVTGWNLEEEEIKAISGLDRGLRFNDPLGYGLYAPIF.

Asn-26 carries N-linked (GlcNAc...) asparagine glycosylation. Tyr-50 serves as the catalytic Proton donor. His-112 is a binding site for substrate. N-linked (GlcNAc...) asparagine glycosylation is found at Asn-141 and Asn-167. NAD(+) contacts are provided by residues 166-167 (SN), 215-224 (SSFGPLSFLE), and 271-281 (KSNNPQRLKQN).

It belongs to the aldo/keto reductase family.

It carries out the reaction xylitol + NAD(+) = D-xylose + NADH + H(+). The enzyme catalyses xylitol + NADP(+) = D-xylose + NADPH + H(+). Its pathway is carbohydrate metabolism; D-xylose degradation. Catalyzes the initial reaction in the xylose utilization pathway by reducing D-xylose into xylitol. Xylose is a major component of hemicelluloses such as xylan. Most fungi utilize D-xylose via three enzymatic reactions, xylose reductase (XR), xylitol dehydrogenase (XDH), and xylulokinase, to form xylulose 5-phosphate, which enters pentose phosphate pathway. In Aspergillus niger (strain ATCC MYA-4892 / CBS 513.88 / FGSC A1513), this protein is Probable NAD(P)H-dependent D-xylose reductase xyl1 (xyl1).